Consider the following 418-residue polypeptide: UPF0754 membrane protein alr5253 (418 aa).

2 consecutive transmembrane segments (helical) span residues 10 to 30 and 394 to 414; these read WSHL…GYFT and IVSL…AFFI.

Belongs to the UPF0754 family.

It localises to the cell inner membrane. The polypeptide is UPF0754 membrane protein alr5253 (Nostoc sp. (strain PCC 7120 / SAG 25.82 / UTEX 2576)).